The sequence spans 524 residues: ORC1-type DNA replication protein 4 (524 aa).

Polar residues predominate over residues 1-23 (MTDKSNNPAPASDPSTTETSNDA). Positions 1-67 (MTDKSNNPAP…DDPSDEASRG (67 aa)) are disordered. Residues 128–132 (TGKTA), Y325, and R337 each bind ATP.

The protein belongs to the CDC6/cdc18 family.

Functionally, involved in regulation of DNA replication. The chain is ORC1-type DNA replication protein 4 (cdc6d) from Haloarcula marismortui (strain ATCC 43049 / DSM 3752 / JCM 8966 / VKM B-1809) (Halobacterium marismortui).